Consider the following 256-residue polypeptide: Triosephosphate isomerase (256 aa).

Residue 9-11 (NWK) participates in substrate binding. Residue His95 is the Electrophile of the active site. Catalysis depends on Glu167, which acts as the Proton acceptor. Substrate contacts are provided by residues Gly173, Ser213, and 234–235 (GG).

It belongs to the triosephosphate isomerase family. Homodimer.

It is found in the cytoplasm. The enzyme catalyses D-glyceraldehyde 3-phosphate = dihydroxyacetone phosphate. Its pathway is carbohydrate biosynthesis; gluconeogenesis. The protein operates within carbohydrate degradation; glycolysis; D-glyceraldehyde 3-phosphate from glycerone phosphate: step 1/1. Involved in the gluconeogenesis. Catalyzes stereospecifically the conversion of dihydroxyacetone phosphate (DHAP) to D-glyceraldehyde-3-phosphate (G3P). This Symbiobacterium thermophilum (strain DSM 24528 / JCM 14929 / IAM 14863 / T) protein is Triosephosphate isomerase.